Here is a 282-residue protein sequence, read N- to C-terminus: 4-hydroxy-3-methylbut-2-enyl diphosphate reductase (282 aa).

Cys12 is a binding site for [4Fe-4S] cluster. 2 residues coordinate (2E)-4-hydroxy-3-methylbut-2-enyl diphosphate: His40 and His72. Positions 40 and 72 each coordinate dimethylallyl diphosphate. Isopentenyl diphosphate is bound by residues His40 and His72. Cys94 is a binding site for [4Fe-4S] cluster. His122 is a binding site for (2E)-4-hydroxy-3-methylbut-2-enyl diphosphate. Dimethylallyl diphosphate is bound at residue His122. Residue His122 coordinates isopentenyl diphosphate. Glu124 (proton donor) is an active-site residue. Thr160 contacts (2E)-4-hydroxy-3-methylbut-2-enyl diphosphate. Cys188 serves as a coordination point for [4Fe-4S] cluster. (2E)-4-hydroxy-3-methylbut-2-enyl diphosphate-binding residues include Ser216, Asn218, and Ser260. Dimethylallyl diphosphate is bound by residues Ser216, Asn218, and Ser260. Positions 216, 218, and 260 each coordinate isopentenyl diphosphate.

Belongs to the IspH family. It depends on [4Fe-4S] cluster as a cofactor.

The catalysed reaction is isopentenyl diphosphate + 2 oxidized [2Fe-2S]-[ferredoxin] + H2O = (2E)-4-hydroxy-3-methylbut-2-enyl diphosphate + 2 reduced [2Fe-2S]-[ferredoxin] + 2 H(+). The enzyme catalyses dimethylallyl diphosphate + 2 oxidized [2Fe-2S]-[ferredoxin] + H2O = (2E)-4-hydroxy-3-methylbut-2-enyl diphosphate + 2 reduced [2Fe-2S]-[ferredoxin] + 2 H(+). It participates in isoprenoid biosynthesis; dimethylallyl diphosphate biosynthesis; dimethylallyl diphosphate from (2E)-4-hydroxy-3-methylbutenyl diphosphate: step 1/1. It functions in the pathway isoprenoid biosynthesis; isopentenyl diphosphate biosynthesis via DXP pathway; isopentenyl diphosphate from 1-deoxy-D-xylulose 5-phosphate: step 6/6. Catalyzes the conversion of 1-hydroxy-2-methyl-2-(E)-butenyl 4-diphosphate (HMBPP) into a mixture of isopentenyl diphosphate (IPP) and dimethylallyl diphosphate (DMAPP). Acts in the terminal step of the DOXP/MEP pathway for isoprenoid precursor biosynthesis. The sequence is that of 4-hydroxy-3-methylbut-2-enyl diphosphate reductase from Geobacter metallireducens (strain ATCC 53774 / DSM 7210 / GS-15).